Reading from the N-terminus, the 97-residue chain is MNLAVQDVVKRPLITEKAERAREANRQYAFEVHRDATKIQVKQAVEKLFNVHVLDVRTAIARGKNKRVGRNVGRRPNWKKAYVTLKEGDTIALFEGT.

It belongs to the universal ribosomal protein uL23 family. As to quaternary structure, part of the 50S ribosomal subunit. Contacts protein L29, and trigger factor when it is bound to the ribosome.

One of the early assembly proteins it binds 23S rRNA. One of the proteins that surrounds the polypeptide exit tunnel on the outside of the ribosome. Forms the main docking site for trigger factor binding to the ribosome. This chain is Large ribosomal subunit protein uL23, found in Anaeromyxobacter dehalogenans (strain 2CP-1 / ATCC BAA-258).